The sequence spans 393 residues: Endoplasmic reticulum junction formation protein lunapark-A (393 aa).

At methionine 1–arginine 45 the chain is on the cytoplasmic side. A helical membrane pass occupies residues leucine 46 to isoleucine 66. Residues proline 67–arginine 69 are Lumenal-facing. A helical membrane pass occupies residues methionine 70 to leucine 90. The Cytoplasmic portion of the chain corresponds to arginine 91–glutamate 393. Positions isoleucine 95–lysine 130 form a coiled coil. The segment at lysine 146–threonine 209 is disordered. The span at threonine 176–proline 190 shows a compositional bias: pro residues. A C4-type; plays a role in ER morphology zinc finger spans residues cysteine 269 to cysteine 294. The tract at residues alanine 314–glutamate 393 is disordered. 2 stretches are compositionally biased toward basic and acidic residues: residues glutamate 340–aspartate 353 and glutamate 364–glycine 383.

It belongs to the lunapark family. In terms of assembly, homodimer; homodimerization requires the C4-type zinc finger motif and decreases during mitosis in a phosphorylation-dependent manner. Phosphorylated. Phosphorylation occurs during interphase. Phosphorylation also occurs during mitosis; these phosphorylations reduce both its homodimerization and the ER three-way tubular junction formation.

Its subcellular location is the endoplasmic reticulum membrane. In terms of biological role, endoplasmic reticulum (ER)-shaping membrane protein that plays a role in determining ER morphology. Involved in the stabilization of nascent three-way ER tubular junctions within the ER network. May also play a role as a curvature-stabilizing protein within three-way ER tubular junction network. This Danio rerio (Zebrafish) protein is Endoplasmic reticulum junction formation protein lunapark-A (lnpka).